The chain runs to 453 residues: Bis(5'-adenosyl)-triphosphatase ENPP4 (453 aa).

An N-terminal signal peptide occupies residues 1-18; the sequence is MKLLLMLLFSGLMTGCRG. Over 19–407 the chain is Extracellular; sequence NSSSASPPKL…DQWCINLPEA (389 aa). Residues D34 and T70 each coordinate Zn(2+). The AMP-threonine intermediate role is filled by T70. The substrate site is built by N91 and Y154. The N-linked (GlcNAc...) asparagine glycan is linked to N166. D189, H193, D237, and H238 together coordinate Zn(2+). Residue D189 coordinates substrate. Cysteines 254 and 287 form a disulfide. A glycan (N-linked (GlcNAc...) asparagine) is linked at N276. Zn(2+) is bound at residue H336. A disulfide bridge connects residues C394 and C401. Residues 408–428 form a helical membrane-spanning segment; sequence IGIVIGALLVLTTLTCLIIIM. Topologically, residues 429-453 are cytoplasmic; that stretch reads QNRVSGPRPFSRLQLQEDDDDPLIG.

It belongs to the nucleotide pyrophosphatase/phosphodiesterase family. Zn(2+) serves as cofactor.

The protein resides in the cell membrane. The enzyme catalyses P(1),P(3)-bis(5'-adenosyl) triphosphate + H2O = AMP + ADP + 2 H(+). Functionally, hydrolyzes extracellular Ap3A into AMP and ADP, and Ap4A into AMP and ATP. Ap3A and Ap4A are diadenosine polyphosphates thought to induce proliferation of vascular smooth muscle cells. Acts as a procoagulant, mediating platelet aggregation at the site of nascent thrombus via release of ADP from Ap3A and activation of ADP receptors. This chain is Bis(5'-adenosyl)-triphosphatase ENPP4 (ENPP4), found in Bos taurus (Bovine).